A 116-amino-acid chain; its full sequence is UPF0298 protein EF_2453 (116 aa).

Belongs to the UPF0298 family.

It is found in the cytoplasm. This is UPF0298 protein EF_2453 from Enterococcus faecalis (strain ATCC 700802 / V583).